The chain runs to 430 residues: Major capsid protein (430 aa).

A binding to the capsid assembly scaffolding protein region spans residues 2–56 (ALNEGQIVTLAVDEIIETISAITPMAQKAKKYTPPAASMQRSSNTIWMPVEQESP). Residues 223-345 (STATGITVSG…DAMAVNILNV (123 aa)) form an i domain region.

This sequence belongs to the P22 phage major capsid protein family. In terms of assembly, interacts (via N-terminus) with the capsid assembly scaffolding protein (via C-terminus); capsid proteins and scaffolding proteins form building blocks that assemble to form the procapsid. Interacts with the portal protein.

The protein resides in the virion. Functionally, self-assembles to form an icosahedral capsid with a T=7 symmetry. This is Major capsid protein (5) from Salmonella phage P22 (Bacteriophage P22).